The chain runs to 277 residues: Large ribosomal subunit protein uL2c (277 aa).

The interval 228 to 254 (VDHPHGGGEGRCPVGHAQPRTPWGKPA) is disordered.

Belongs to the universal ribosomal protein uL2 family. In terms of assembly, part of the 50S ribosomal subunit.

It is found in the plastid. The protein resides in the chloroplast. The chain is Large ribosomal subunit protein uL2c (rpl2) from Ostreococcus tauri.